The sequence spans 45 residues: Mu-conotoxin-like Cal 12.1.1d (45 aa).

4 disulfides stabilise this stretch: C3–C16, C11–C28, C18–C33, and C27–C39. Position 17 is a 6'-bromotryptophan (W17). E21 carries the post-translational modification 4-carboxyglutamate. P23 carries the post-translational modification 4-hydroxyproline. A 6'-bromotryptophan mark is found at W37 and W38. 4-hydroxyproline is present on P40. The residue at position 44 (W44) is a 6'-bromotryptophan.

Expressed by the venom duct.

Its subcellular location is the secreted. In terms of biological role, mu-conotoxins block voltage-gated sodium channels. This toxin reversibly blocks voltage-gated sodium channel in cephalopods, with no alteration in the voltage dependence of sodium conductance or on the kinetics of inactivation. This chain is Mu-conotoxin-like Cal 12.1.1d, found in Californiconus californicus (California cone).